Here is a 171-residue protein sequence, read N- to C-terminus: UPF0763 protein HPP12_0677 (171 aa).

It belongs to the UPF0763 family.

The protein is UPF0763 protein HPP12_0677 of Helicobacter pylori (strain P12).